Reading from the N-terminus, the 130-residue chain is Small ribosomal subunit protein uS9 (130 aa).

The disordered stretch occupies residues 109–130; the sequence is RKKERKKYGQPGARAKFQYSKR.

Belongs to the universal ribosomal protein uS9 family.

In Maridesulfovibrio salexigens (strain ATCC 14822 / DSM 2638 / NCIMB 8403 / VKM B-1763) (Desulfovibrio salexigens), this protein is Small ribosomal subunit protein uS9.